The primary structure comprises 155 residues: Cytochrome c-type biogenesis protein CcmE (155 aa).

Residues M1 to R8 lie on the Cytoplasmic side of the membrane. The chain crosses the membrane as a helical; Signal-anchor for type II membrane protein span at residues L9 to A29. The Periplasmic segment spans residues L30–K155. Positions 124 and 128 each coordinate heme.

It belongs to the CcmE/CycJ family.

The protein resides in the cell inner membrane. Its function is as follows. Heme chaperone required for the biogenesis of c-type cytochromes. Transiently binds heme delivered by CcmC and transfers the heme to apo-cytochromes in a process facilitated by CcmF and CcmH. The chain is Cytochrome c-type biogenesis protein CcmE from Stutzerimonas stutzeri (strain A1501) (Pseudomonas stutzeri).